The chain runs to 538 residues: NAD(P)H-quinone oxidoreductase chain 4 (538 aa).

Helical transmembrane passes span 11–31 (FPWL…VPFI), 43–63 (YALI…FKGF), 95–115 (MPLI…AWPV), 119–139 (PKLF…VFAV), 143–163 (LLFF…LAIW), 175–195 (FIIY…AMGF), 217–237 (GFQL…LPIV), 251–271 (TAPV…YALL), 285–305 (FAPL…LTSF), 314–334 (IAYS…SFSS), 340–360 (AMLQ…LVGA), 382–404 (IMFA…SGFI), 425–445 (IVVA…LLSM), and 472–492 (IYII…PKIM).

Belongs to the complex I subunit 4 family.

The protein localises to the cellular thylakoid membrane. It catalyses the reaction a plastoquinone + NADH + (n+1) H(+)(in) = a plastoquinol + NAD(+) + n H(+)(out). The catalysed reaction is a plastoquinone + NADPH + (n+1) H(+)(in) = a plastoquinol + NADP(+) + n H(+)(out). Its function is as follows. NDH-1 shuttles electrons from NAD(P)H, via FMN and iron-sulfur (Fe-S) centers, to quinones in the respiratory chain. The immediate electron acceptor for the enzyme in this species is believed to be plastoquinone. Couples the redox reaction to proton translocation (for every two electrons transferred, four hydrogen ions are translocated across the cytoplasmic membrane), and thus conserves the redox energy in a proton gradient. The chain is NAD(P)H-quinone oxidoreductase chain 4 from Prochlorococcus marinus (strain NATL2A).